The sequence spans 537 residues: MFKREEIIEMANKDFEKAWIETKDLIKAKKVNESYPRIKPVFGKTHPVNDTIENLRQAYLRMGFEEYINPVIVDERDIYKQFGPEAMAVLDRCFYLAGLPRPDVGLSDEKISQIEKLGIKVSEHKESLQKILHGYKKGTLDGDDLVLEISNALEISSEMGLKILEEVFPEFKDLTAVSSKLTLRSHMTSGWFLTVSDLMNKKPLPFKLFSIDRCFRREQKEDKSHLMTYHSASCAIAGESVDINDGKAIAEGLLSQFGFTNFKFIPDEKKSKYYTPETQTEVYAYHPKLKEWLEVATFGVYSPVALSKYGIDVPVMNLGLGVERLAMISGNFADVREMVYPQFYEHRLDDRDVASMVKLDKVPVMDEIYDLTKELIDLCVKNKDLKSPCELKLEKTFAFGKTKKNVKISIFEKEEGKNLLGPSILNEIYMYDGNVIGIPESFDGVKEEFKDFLEKGKTEGVSTGIRYIDALCFKITSKLEESFVSNTSEFKVKVPIVRSLSDINLKIDDIALKQIMSKNKVIDVRGPVFLNVEVKIE.

Residues 186-188, 231-233, 273-274, and asparagine 317 each bind substrate; these read HMT, SAS, and YY.

The protein belongs to the class-II aminoacyl-tRNA synthetase family. O-phosphoseryl-tRNA(Cys) synthetase subfamily. Homotetramer. Interacts with SepCysS.

The enzyme catalyses tRNA(Cys) + O-phospho-L-serine + ATP = O-phospho-L-seryl-tRNA(Cys) + AMP + diphosphate. In terms of biological role, catalyzes the attachment of O-phosphoserine (Sep) to tRNA(Cys). This Methanococcus maripaludis (strain C6 / ATCC BAA-1332) protein is O-phosphoserine--tRNA(Cys) ligase.